Here is a 190-residue protein sequence, read N- to C-terminus: NADH-quinone oxidoreductase subunit B (190 aa).

[4Fe-4S] cluster is bound by residues Cys69, Cys70, Cys134, and Cys164.

The protein belongs to the complex I 20 kDa subunit family. As to quaternary structure, NDH-1 is composed of 14 different subunits. Subunits NuoB, C, D, E, F, and G constitute the peripheral sector of the complex. [4Fe-4S] cluster is required as a cofactor.

It localises to the cell inner membrane. It carries out the reaction a quinone + NADH + 5 H(+)(in) = a quinol + NAD(+) + 4 H(+)(out). NDH-1 shuttles electrons from NADH, via FMN and iron-sulfur (Fe-S) centers, to quinones in the respiratory chain. Couples the redox reaction to proton translocation (for every two electrons transferred, four hydrogen ions are translocated across the cytoplasmic membrane), and thus conserves the redox energy in a proton gradient. This chain is NADH-quinone oxidoreductase subunit B, found in Hyphomonas neptunium (strain ATCC 15444).